A 150-amino-acid chain; its full sequence is Copper transporter 3 (150 aa).

The next 2 helical transmembrane spans lie at 50 to 70 (GGMY…LEFL) and 100 to 120 (LAYL…LAAV).

Belongs to the copper transporter (Ctr) (TC 1.A.56) family. SLC31A subfamily.

The protein localises to the membrane. Involved in the transport of copper. The polypeptide is Copper transporter 3 (COPT3) (Oryza sativa subsp. japonica (Rice)).